We begin with the raw amino-acid sequence, 308 residues long: Ribosomal RNA large subunit methyltransferase F (308 aa).

This sequence belongs to the methyltransferase superfamily. METTL16/RlmF family.

The protein localises to the cytoplasm. The catalysed reaction is adenosine(1618) in 23S rRNA + S-adenosyl-L-methionine = N(6)-methyladenosine(1618) in 23S rRNA + S-adenosyl-L-homocysteine + H(+). Specifically methylates the adenine in position 1618 of 23S rRNA. This is Ribosomal RNA large subunit methyltransferase F from Salmonella paratyphi A (strain ATCC 9150 / SARB42).